The following is a 122-amino-acid chain: Large ribosomal subunit protein uL14 (122 aa).

This sequence belongs to the universal ribosomal protein uL14 family. In terms of assembly, part of the 50S ribosomal subunit. Forms a cluster with proteins L3 and L19. In the 70S ribosome, L14 and L19 interact and together make contacts with the 16S rRNA in bridges B5 and B8.

Its function is as follows. Binds to 23S rRNA. Forms part of two intersubunit bridges in the 70S ribosome. This Ruthia magnifica subsp. Calyptogena magnifica protein is Large ribosomal subunit protein uL14.